A 349-amino-acid chain; its full sequence is GDP-mannose:glycolipid 4-beta-D-mannosyltransferase (349 aa).

The first 14 residues, Met-1–Ala-14, serve as a signal peptide directing secretion.

This sequence belongs to the glycosyltransferase 94 family.

It is found in the cell inner membrane. The catalysed reaction is beta-D-GlcA-(1-&gt;2)-alpha-D-Man-(1-&gt;3)-beta-D-Glc-(1-&gt;4)-alpha-D-Glc-di-trans,octa-cis-undecaprenyl diphosphate + GDP-alpha-D-mannose = beta-D-Man-(1-&gt;4)-beta-D-GlcA-(1-&gt;2)-alpha-D-Man-(1-&gt;3)-beta-D-Glc-(1-&gt;4)-alpha-D-Glc-di-trans,octa-cis-undecaprenyl diphosphate + GDP + H(+). It functions in the pathway glycan biosynthesis; xanthan biosynthesis. Nonprocessive beta-mannosyltransferase that catalyzes the transfer of a mannose residue from GDP-mannose to glucuronic acid-beta-1,2-mannose-alpha-1,3-glucose-beta-1,4-glucose-PP-polyisoprenyl to form the lipid-linked pentasaccharide repeating unit of xanthan, Man-GlcA-Man-Glc(2)-PP-Pol. Is involved in the biosynthesis of the exopolysaccharide xanthan. To a lesser extent, can also use ADP-Man and even GDP-Glc as sugar donor substrates in vitro. Is unable to transfer a Man residue to the free-tetrasaccharide GlcA-Man-Glc(2) used as an acceptor, which indicates that the diphosphate group and the lipid moiety in the acceptor substrate are of major importance for acceptor binding and catalysis. This Xanthomonas campestris pv. campestris protein is GDP-mannose:glycolipid 4-beta-D-mannosyltransferase (gumI).